The primary structure comprises 432 residues: Muscle cell intermediate filament protein OV71 (432 aa).

The coil 1B stretch occupies residues 1 to 111; that stretch reads KLIDELEEYK…RVHDQEISEL (111 aa). The IF rod domain occupies 1–277; it reads KLIDELEEYK…KMLEGEENRA (277 aa). Residues 112-128 form a linker 12 region; the sequence is QAMAARDTTSENREYFK. Residues 129 to 277 are coil 2; that stretch reads NELSSAIRDI…KMLEGEENRA (149 aa). The tract at residues 278 to 432 is tail; that stretch reads GLRQLVEQVV…HIQRSSHTIS (155 aa). The LTD domain occupies 310 to 427; it reads SRTSFQRSAK…EERASHIQRS (118 aa).

It belongs to the intermediate filament family.

The polypeptide is Muscle cell intermediate filament protein OV71 (OV71) (Onchocerca volvulus).